The primary structure comprises 428 residues: Nucleoside diphosphate phosphatase ENTPD5 (428 aa).

A signal peptide spans 1–24 (MATSWGTVFFMLVVSCVCSAVSHR). Glu172 acts as the Proton acceptor in catalysis. N-linked (GlcNAc...) asparagine glycosylation occurs at Asn232. 2 disulfide bridges follow: Cys272/Cys303 and Cys363/Cys377. An N-linked (GlcNAc...) asparagine glycan is attached at Asn368.

Belongs to the GDA1/CD39 NTPase family. As to quaternary structure, monomer; active form. Homodimer; disulfide-linked. Homodimers are enzymatically inactive. Ca(2+) serves as cofactor. It depends on Mg(2+) as a cofactor. N-glycosylated; high-mannose type. Glycosylation is not essential for enzymatic activity. As to expression, expressed in adult liver, kidney, prostate, testis and colon. Much weaker expression in other tissues.

The protein localises to the endoplasmic reticulum. It localises to the secreted. It carries out the reaction a ribonucleoside 5'-diphosphate + H2O = a ribonucleoside 5'-phosphate + phosphate + H(+). The enzyme catalyses GDP + H2O = GMP + phosphate + H(+). The catalysed reaction is UDP + H2O = UMP + phosphate + H(+). It catalyses the reaction IDP + H2O = IMP + phosphate + H(+). It carries out the reaction CDP + H2O = CMP + phosphate + H(+). The enzyme catalyses ADP + H2O = AMP + phosphate + H(+). The protein operates within protein modification; protein glycosylation. Hydrolyzes nucleoside diphosphates with a preference for GDP, IDP and UDP compared to ADP and CDP. In the lumen of the endoplasmic reticulum, hydrolyzes UDP that acts as an end-product feedback inhibitor of the UDP-Glc:glycoprotein glucosyltransferases. UMP can be transported back by an UDP-sugar antiporter to the cytosol where it is consumed to regenerate UDP-glucose. Therefore, it positively regulates protein reglucosylation by clearing UDP from the ER lumen and by promoting the regeneration of UDP-glucose. Protein reglucosylation is essential to proper glycoprotein folding and quality control in the ER. The polypeptide is Nucleoside diphosphate phosphatase ENTPD5 (Homo sapiens (Human)).